The primary structure comprises 520 residues: Mu-like prophage FluMu protein gp29 (520 aa).

The protein to phage Mu protein gp29.

The polypeptide is Mu-like prophage FluMu protein gp29 (Haemophilus influenzae (strain ATCC 51907 / DSM 11121 / KW20 / Rd)).